The chain runs to 310 residues: UPF0761 membrane protein VSAL_I2938 (310 aa).

A run of 6 helical transmembrane segments spans residues 34–54, 97–117, 136–156, 178–198, 207–227, and 242–262; these read YMAYITLLSLVPLVTVLLSVL, MTAVGSGFLFVASVMLISAID, FSLYWMILTLGPLLVWASLAA, LLGWLPIILSFSAFLGLYLLV, HALVGAMSAGCLFEVSKVGFA, and ALAAVPILFVWIYLCWIIVLI.

It belongs to the UPF0761 family.

The protein resides in the cell inner membrane. The protein is UPF0761 membrane protein VSAL_I2938 of Aliivibrio salmonicida (strain LFI1238) (Vibrio salmonicida (strain LFI1238)).